Consider the following 437-residue polypeptide: Serine--tRNA ligase (437 aa).

Residue 227 to 229 coordinates L-serine; that stretch reads TAE. ATP contacts are provided by residues 258 to 260 and Val274; that span reads RSE. L-serine is bound at residue Glu281. 347 to 350 provides a ligand contact to ATP; that stretch reads ETHS. Thr382 is an L-serine binding site.

The protein belongs to the class-II aminoacyl-tRNA synthetase family. Type-1 seryl-tRNA synthetase subfamily. In terms of assembly, homodimer. The tRNA molecule binds across the dimer.

Its subcellular location is the cytoplasm. It carries out the reaction tRNA(Ser) + L-serine + ATP = L-seryl-tRNA(Ser) + AMP + diphosphate + H(+). It catalyses the reaction tRNA(Sec) + L-serine + ATP = L-seryl-tRNA(Sec) + AMP + diphosphate + H(+). It participates in aminoacyl-tRNA biosynthesis; selenocysteinyl-tRNA(Sec) biosynthesis; L-seryl-tRNA(Sec) from L-serine and tRNA(Sec): step 1/1. Its function is as follows. Catalyzes the attachment of serine to tRNA(Ser). Is also able to aminoacylate tRNA(Sec) with serine, to form the misacylated tRNA L-seryl-tRNA(Sec), which will be further converted into selenocysteinyl-tRNA(Sec). The sequence is that of Serine--tRNA ligase from Deinococcus geothermalis (strain DSM 11300 / CIP 105573 / AG-3a).